The following is an 81-amino-acid chain: Sulfur carrier protein TusA (81 aa).

Residue Cys19 is the Cysteine persulfide intermediate of the active site.

This sequence belongs to the sulfur carrier protein TusA family. Interacts with IscS.

The protein localises to the cytoplasm. Its pathway is tRNA modification. In terms of biological role, sulfur carrier protein involved in sulfur trafficking in the cell. Part of a sulfur-relay system required for 2-thiolation during synthesis of 2-thiouridine of the modified wobble base 5-methylaminomethyl-2-thiouridine (mnm(5)s(2)U) in tRNA. Interacts with IscS and stimulates its cysteine desulfurase activity. Accepts an activated sulfur from IscS, which is then transferred to TusD, and thus determines the direction of sulfur flow from IscS to 2-thiouridine formation. Also appears to be involved in sulfur transfer for the biosynthesis of molybdopterin. The chain is Sulfur carrier protein TusA from Escherichia fergusonii (strain ATCC 35469 / DSM 13698 / CCUG 18766 / IAM 14443 / JCM 21226 / LMG 7866 / NBRC 102419 / NCTC 12128 / CDC 0568-73).